Here is a 467-residue protein sequence, read N- to C-terminus: Putative sulfoquinovose importer (467 aa).

Transmembrane regions (helical) follow at residues Ile-17–Leu-37, Ile-54–Leu-74, Pro-88–Thr-108, Ala-121–Ile-141, Gly-160–Phe-180, Val-185–Cys-205, Leu-238–Ile-258, Trp-275–Val-295, Val-303–Ser-323, Ser-325–Leu-345, Ile-379–Pro-399, and Leu-414–Tyr-434.

The protein belongs to the sodium:galactoside symporter (TC 2.A.2) family.

The protein localises to the cell inner membrane. Its function is as follows. Could be involved in sulfoquinovose import. The polypeptide is Putative sulfoquinovose importer (yihO) (Escherichia coli (strain K12)).